We begin with the raw amino-acid sequence, 297 residues long: Aspartate carbamoyltransferase catalytic subunit (297 aa).

Carbamoyl phosphate contacts are provided by Arg52 and Thr53. Lys80 serves as a coordination point for L-aspartate. Positions 102, 130, and 133 each coordinate carbamoyl phosphate. 2 residues coordinate L-aspartate: Arg167 and Arg217. Positions 256 and 257 each coordinate carbamoyl phosphate.

It belongs to the aspartate/ornithine carbamoyltransferase superfamily. ATCase family. Heterododecamer (2C3:3R2) of six catalytic PyrB chains organized as two trimers (C3), and six regulatory PyrI chains organized as three dimers (R2).

It carries out the reaction carbamoyl phosphate + L-aspartate = N-carbamoyl-L-aspartate + phosphate + H(+). It functions in the pathway pyrimidine metabolism; UMP biosynthesis via de novo pathway; (S)-dihydroorotate from bicarbonate: step 2/3. Catalyzes the condensation of carbamoyl phosphate and aspartate to form carbamoyl aspartate and inorganic phosphate, the committed step in the de novo pyrimidine nucleotide biosynthesis pathway. This is Aspartate carbamoyltransferase catalytic subunit from Helicobacter hepaticus (strain ATCC 51449 / 3B1).